Reading from the N-terminus, the 138-residue chain is Ribulose bisphosphate carboxylase small subunit (138 aa).

The protein belongs to the RuBisCO small chain family. In terms of assembly, heterohexadecamer of 8 large and 8 small subunits.

The protein resides in the plastid. The protein localises to the chloroplast. Its function is as follows. RuBisCO catalyzes two reactions: the carboxylation of D-ribulose 1,5-bisphosphate, the primary event in carbon dioxide fixation, as well as the oxidative fragmentation of the pentose substrate in the photorespiration process. Both reactions occur simultaneously and in competition at the same active site. Although the small subunit is not catalytic it is essential for maximal activity. The polypeptide is Ribulose bisphosphate carboxylase small subunit (Pyropia katadae (Red alga)).